The following is a 299-amino-acid chain: Delta-9 desaturase-like 3 protein (299 aa).

Helical transmembrane passes span 38-57 (AVGA…TWEA) and 58-76 (FRFA…TFSY). Residues 77–82 (HRNLTH) carry the Histidine box-1 motif. Positions 114 to 118 (HRFHH) match the Histidine box-2 motif. Transmembrane regions (helical) follow at residues 174–194 (IGLH…LPYL) and 198–218 (VGVG…ACHI). Residues 246–250 (HNNHH) carry the Histidine box-3 motif. The chain crosses the membrane as a helical span at residues 262–282 (WYQVDLTWYLIWFFQVLGLAT).

Belongs to the fatty acid desaturase type 1 family. Fe cation is required as a cofactor.

The protein resides in the endoplasmic reticulum membrane. It functions in the pathway lipid metabolism; polyunsaturated fatty acid biosynthesis. The sequence is that of Delta-9 desaturase-like 3 protein from Arabidopsis thaliana (Mouse-ear cress).